The chain runs to 147 residues: Acireductone dioxygenase (147 aa).

Fe(2+) is bound by residues His-74, His-76, Glu-80, and His-119. Positions 74, 76, 80, and 119 each coordinate Ni(2+).

It belongs to the acireductone dioxygenase (ARD) family. Requires Fe(2+) as cofactor. The cofactor is Ni(2+).

It is found in the cytoplasm. It localises to the nucleus. The catalysed reaction is 1,2-dihydroxy-5-(methylsulfanyl)pent-1-en-3-one + O2 = 4-methylsulfanyl-2-oxobutanoate + formate + 2 H(+). The enzyme catalyses 1,2-dihydroxy-5-(methylsulfanyl)pent-1-en-3-one + O2 = 3-(methylsulfanyl)propanoate + CO + formate + 2 H(+). Its pathway is amino-acid biosynthesis; L-methionine biosynthesis via salvage pathway; L-methionine from S-methyl-5-thio-alpha-D-ribose 1-phosphate: step 5/6. In terms of biological role, catalyzes 2 different reactions between oxygen and the acireductone 1,2-dihydroxy-3-keto-5-methylthiopentene (DHK-MTPene) depending upon the metal bound in the active site. Fe-containing acireductone dioxygenase (Fe-ARD) produces formate and 2-keto-4-methylthiobutyrate (KMTB), the alpha-ketoacid precursor of methionine in the methionine recycle pathway. Ni-containing acireductone dioxygenase (Ni-ARD) produces methylthiopropionate, carbon monoxide and formate, and does not lie on the methionine recycle pathway. This Dictyostelium discoideum (Social amoeba) protein is Acireductone dioxygenase (adi1).